The following is a 442-amino-acid chain: DNA topoisomerase medium subunit (442 aa).

The Topo IIA-type catalytic domain occupies 29–438 (IPNMIDGFKP…DVVTEYTKDL (410 aa)). The O-(5'-phospho-DNA)-tyrosine intermediate role is filled by tyrosine 117.

Belongs to the type II topoisomerase family. Part of the DNA topoisomerase complex made of gp39, gp52 and gp60. Requires Mg(2+) as cofactor.

It catalyses the reaction ATP-dependent breakage, passage and rejoining of double-stranded DNA.. In terms of biological role, medium subunit of the DNA topoisomerase that untwists superhelical DNA. Controls topological states of double-stranded DNA by transient breakage and subsequent rejoining of DNA strands. This is DNA topoisomerase medium subunit (52) from Enterobacteria phage T4 (Bacteriophage T4).